The sequence spans 233 residues: Large ribosomal subunit protein uL3 (233 aa).

The tract at residues 145 to 172 (FGSQRASHGNSRSHRVPGSIGQAQDPGR) is disordered. Glutamine 168 is subject to N5-methylglutamine.

The protein belongs to the universal ribosomal protein uL3 family. As to quaternary structure, part of the 50S ribosomal subunit. Forms a cluster with proteins L14 and L19. Methylated by PrmB.

Functionally, one of the primary rRNA binding proteins, it binds directly near the 3'-end of the 23S rRNA, where it nucleates assembly of the 50S subunit. The chain is Large ribosomal subunit protein uL3 from Bordetella petrii (strain ATCC BAA-461 / DSM 12804 / CCUG 43448).